We begin with the raw amino-acid sequence, 652 residues long: Putative ankyrin repeat protein R734 (652 aa).

ANK repeat units lie at residues 77 to 105 (TNDIIITNTLDLNDLETFIYLLTNGANNS), 106 to 136 (EGIKLLVTWCVYYGRLDVLNYLVDNNILPTE), 138 to 167 (TLRDYLPITISENHDEVYKFIIDHEFHLGY), 192 to 219 (NDLKLSDLIFMHHLKVEILQELFSSGYE), 220 to 242 (FDNRLFEKICRTTNITLIKFFMD), 243 to 274 (IGFDPMNIVIQPNQLCIYLANILLDSGRQFTQ), 307 to 337 (INDNFINCIIRRGSLDHLKDILNRTSLNINR), 396 to 430 (SDNNIINFINHGTGTHKFEILKYLLENDCYEDPNY), 468 to 498 (PKLTPIIISNYLLSNRKISNTLLKFGTTIYS), and 535 to 564 (TNKSIMLATIISENIDLFDFLLELNRDNNL).

The polypeptide is Putative ankyrin repeat protein R734 (Acanthamoeba polyphaga mimivirus (APMV)).